Consider the following 576-residue polypeptide: Minor capsid protein P2 (576 aa).

A hydrophobic region spans residues L13–L35. The interval T322–S348 is disordered.

Interacts with the major capsid protein.

It is found in the virion. Its function is as follows. One of the minor capsid proteins that constitute a network internal to the major capsid proteins and outside the lipid membrane. The minor capsid proteins glue and stabilize the capsomers. Also acts as a molecular tape measure protein that determines the size of the viral capsid. This chain is Minor capsid protein P2, found in Chlorella (PBCV-1).